The sequence spans 762 residues: 5-methyltetrahydropteroyltriglutamate--homocysteine methyltransferase (762 aa).

5-methyltetrahydropteroyltri-L-glutamate is bound by residues 16–19 and Lys-117; that span reads RELK. L-homocysteine-binding positions include 438 to 440 and Glu-491; that span reads IGS. L-methionine contacts are provided by residues 438–440 and Glu-491; that span reads IGS. Residues 522-523 and Trp-568 each bind 5-methyltetrahydropteroyltri-L-glutamate; that span reads RC. Asp-606 lines the L-homocysteine pocket. Position 606 (Asp-606) interacts with L-methionine. Residue Glu-612 coordinates 5-methyltetrahydropteroyltri-L-glutamate. Zn(2+)-binding residues include His-648, Cys-650, and Glu-672. The active-site Proton donor is the His-701. Cys-733 contributes to the Zn(2+) binding site.

Belongs to the vitamin-B12 independent methionine synthase family. The cofactor is Zn(2+).

The enzyme catalyses 5-methyltetrahydropteroyltri-L-glutamate + L-homocysteine = tetrahydropteroyltri-L-glutamate + L-methionine. It participates in amino-acid biosynthesis; L-methionine biosynthesis via de novo pathway; L-methionine from L-homocysteine (MetE route): step 1/1. Catalyzes the transfer of a methyl group from 5-methyltetrahydrofolate to homocysteine resulting in methionine formation. This is 5-methyltetrahydropteroyltriglutamate--homocysteine methyltransferase from Pseudomonas fluorescens (strain ATCC BAA-477 / NRRL B-23932 / Pf-5).